Consider the following 355-residue polypeptide: Beta-ketoacyl-[acyl-carrier-protein] synthase III (355 aa).

Active-site residues include C122 and H280. The ACP-binding stretch occupies residues 281-285 (QANMR). N311 is an active-site residue.

This sequence belongs to the thiolase-like superfamily. FabH family. As to quaternary structure, homodimer.

It is found in the cytoplasm. The enzyme catalyses malonyl-[ACP] + acetyl-CoA + H(+) = 3-oxobutanoyl-[ACP] + CO2 + CoA. The protein operates within lipid metabolism; fatty acid biosynthesis. Functionally, catalyzes the condensation reaction of fatty acid synthesis by the addition to an acyl acceptor of two carbons from malonyl-ACP. Catalyzes the first condensation reaction which initiates fatty acid synthesis and may therefore play a role in governing the total rate of fatty acid production. Possesses both acetoacetyl-ACP synthase and acetyl transacylase activities. Its substrate specificity determines the biosynthesis of branched-chain and/or straight-chain of fatty acids. The protein is Beta-ketoacyl-[acyl-carrier-protein] synthase III of Kocuria rhizophila (strain ATCC 9341 / DSM 348 / NBRC 103217 / DC2201).